The following is a 264-amino-acid chain: MVESKLMIADRSFASRLIMGTGGASNLAVLQEALVASGTELTTVAIRRVDAEGGTGLLDLLNRLGITPLPNTAGCRSAAEAVLTAQLAREALATNWVKLEVIADERTLLPDAIELVRAAEQLVDDGFVVLPYTNDDPVLARRLEDTGCAAVMPLGSPIGTGLGITNPHNIEMIVASAGVPVVLDAGIGTASDAALAMELGCDALLLATAVTRAADPAAMAAAMSAAVTAGYLARCAGRIPKRFWAQASSPTLVTTQSPGAESGN.

Lys98 serves as the catalytic Schiff-base intermediate with DXP. Residues Gly159, 185–186 (AG), and 207–208 (AT) contribute to the 1-deoxy-D-xylulose 5-phosphate site.

Belongs to the ThiG family. In terms of assembly, homotetramer. Forms heterodimers with either ThiH or ThiS.

Its subcellular location is the cytoplasm. The catalysed reaction is [ThiS sulfur-carrier protein]-C-terminal-Gly-aminoethanethioate + 2-iminoacetate + 1-deoxy-D-xylulose 5-phosphate = [ThiS sulfur-carrier protein]-C-terminal Gly-Gly + 2-[(2R,5Z)-2-carboxy-4-methylthiazol-5(2H)-ylidene]ethyl phosphate + 2 H2O + H(+). The protein operates within cofactor biosynthesis; thiamine diphosphate biosynthesis. Catalyzes the rearrangement of 1-deoxy-D-xylulose 5-phosphate (DXP) to produce the thiazole phosphate moiety of thiamine. Sulfur is provided by the thiocarboxylate moiety of the carrier protein ThiS. In vitro, sulfur can be provided by H(2)S. The protein is Thiazole synthase of Mycobacterium ulcerans (strain Agy99).